A 318-amino-acid chain; its full sequence is Deoxyribose-phosphate aldolase (318 aa).

Catalysis depends on D155, which acts as the Proton donor/acceptor. K218 (schiff-base intermediate with acetaldehyde) is an active-site residue. Catalysis depends on K254, which acts as the Proton donor/acceptor.

This sequence belongs to the DeoC/FbaB aldolase family. DeoC type 2 subfamily. As to quaternary structure, interacts with YBX1.

The protein localises to the cytoplasm. It is found in the cytoplasmic granule. The protein resides in the nucleus. It catalyses the reaction 2-deoxy-D-ribose 5-phosphate = D-glyceraldehyde 3-phosphate + acetaldehyde. Its pathway is carbohydrate degradation; 2-deoxy-D-ribose 1-phosphate degradation; D-glyceraldehyde 3-phosphate and acetaldehyde from 2-deoxy-alpha-D-ribose 1-phosphate: step 2/2. In terms of biological role, catalyzes a reversible aldol reaction between acetaldehyde and D-glyceraldehyde 3-phosphate to generate 2-deoxy-D-ribose 5-phosphate. Participates in stress granule (SG) assembly. May allow ATP production from extracellular deoxyinosine in conditions of energy deprivation. The sequence is that of Deoxyribose-phosphate aldolase (Dera) from Mus musculus (Mouse).